The sequence spans 335 residues: Anthranilate phosphoribosyltransferase (335 aa).

Residues G79, 82–83, T87, 89–92, 107–115, and S119 contribute to the 5-phospho-alpha-D-ribose 1-diphosphate site; these read GD, NVST, and KHGSRSVSS. G79 lines the anthranilate pocket. Residue S91 coordinates Mg(2+). R165 lines the anthranilate pocket. Residues D223 and E224 each contribute to the Mg(2+) site.

Belongs to the anthranilate phosphoribosyltransferase family. As to quaternary structure, homodimer. Mg(2+) is required as a cofactor.

The enzyme catalyses N-(5-phospho-beta-D-ribosyl)anthranilate + diphosphate = 5-phospho-alpha-D-ribose 1-diphosphate + anthranilate. The protein operates within amino-acid biosynthesis; L-tryptophan biosynthesis; L-tryptophan from chorismate: step 2/5. Catalyzes the transfer of the phosphoribosyl group of 5-phosphorylribose-1-pyrophosphate (PRPP) to anthranilate to yield N-(5'-phosphoribosyl)-anthranilate (PRA). This is Anthranilate phosphoribosyltransferase from Helicobacter pylori (strain HPAG1).